The following is a 921-amino-acid chain: Isoleucine--tRNA ligase (921 aa).

Positions 57 to 67 match the 'HIGH' region motif; the sequence is PYANGDIHMGH. E552 lines the L-isoleucyl-5'-AMP pocket. The short motif at 593–597 is the 'KMSKS' region element; the sequence is KMSKS. An ATP-binding site is contributed by K596. C888, C891, C908, and C911 together coordinate Zn(2+).

This sequence belongs to the class-I aminoacyl-tRNA synthetase family. IleS type 1 subfamily. As to quaternary structure, monomer. Zn(2+) serves as cofactor.

The protein localises to the cytoplasm. It carries out the reaction tRNA(Ile) + L-isoleucine + ATP = L-isoleucyl-tRNA(Ile) + AMP + diphosphate. Its function is as follows. Catalyzes the attachment of isoleucine to tRNA(Ile). As IleRS can inadvertently accommodate and process structurally similar amino acids such as valine, to avoid such errors it has two additional distinct tRNA(Ile)-dependent editing activities. One activity is designated as 'pretransfer' editing and involves the hydrolysis of activated Val-AMP. The other activity is designated 'posttransfer' editing and involves deacylation of mischarged Val-tRNA(Ile). This Bacillus cereus (strain B4264) protein is Isoleucine--tRNA ligase.